A 535-amino-acid polypeptide reads, in one-letter code: GMP synthase [glutamine-hydrolyzing] (535 aa).

Positions 4–210 (KILILDFGSQ…VHEICHCKPD (207 aa)) constitute a Glutamine amidotransferase type-1 domain. Cys85 serves as the catalytic Nucleophile. Active-site residues include His184 and Glu186. The region spanning 211 to 403 (WVMGDYIAEA…LGLPREMVYR (193 aa)) is the GMPS ATP-PPase domain. Position 238–244 (238–244 (SGGVDSS)) interacts with ATP.

As to quaternary structure, homodimer.

The catalysed reaction is XMP + L-glutamine + ATP + H2O = GMP + L-glutamate + AMP + diphosphate + 2 H(+). The protein operates within purine metabolism; GMP biosynthesis; GMP from XMP (L-Gln route): step 1/1. In terms of biological role, catalyzes the synthesis of GMP from XMP. This chain is GMP synthase [glutamine-hydrolyzing], found in Polynucleobacter asymbioticus (strain DSM 18221 / CIP 109841 / QLW-P1DMWA-1) (Polynucleobacter necessarius subsp. asymbioticus).